Reading from the N-terminus, the 668-residue chain is Putative ankyrin repeat protein FPV244 (668 aa).

ANK repeat units lie at residues 40 to 69 (IPFTAIHQALQLRQIDIVKELIQQNPKLIY), 144 to 173 (EYMKLIKERIQQDELLIAEMLLKKGIDVNA), 177 to 206 (YCRTPIHYAAERGNTKMVNLLLSYGADVNI), 210 to 239 (DDLSVLEYAVDSKNIDTIKAIIDNRSNINK), 272 to 302 (YKNTPLHYAVQAPSLSRLVPKLLERGIDVNA), 306 to 336 (KGETPLYLMAKNGYDTENIRTLIMRGADVNA), 340 to 370 (LYITPLHQASTLDRYKDTVITLLELGANVNA), 374 to 403 (CDKTPIHYAAVRNNVVIINTLLDYGADIEA), 407 to 437 (KIGTVLHFALYGTNPYMSVKTLIDRGANVNS), 441 to 471 (YLSTPLHYACKKNCKPEVIKMLLDNGADVNA), 473 to 502 (NIRNQYPLLIALEYHGIVNILLHYGAELRD), and 571 to 602 (NMFYSLDIFVISKNMNLLHHLVNNPIIKEINT).

In Vertebrata (FPV), this protein is Putative ankyrin repeat protein FPV244.